A 459-amino-acid chain; its full sequence is Argininosuccinate lyase (459 aa).

This sequence belongs to the lyase 1 family. Argininosuccinate lyase subfamily.

It is found in the cytoplasm. The enzyme catalyses 2-(N(omega)-L-arginino)succinate = fumarate + L-arginine. Its pathway is amino-acid biosynthesis; L-arginine biosynthesis; L-arginine from L-ornithine and carbamoyl phosphate: step 3/3. The protein is Argininosuccinate lyase of Staphylococcus aureus (strain bovine RF122 / ET3-1).